Consider the following 213-residue polypeptide: Probable GTP-binding protein EngB (213 aa).

One can recognise an EngB-type G domain in the interval 30 to 204 (EGFEVAFAGR…YTALAGWMEL (175 aa)). Residues 38-45 (GRSNAGKS), 64-68 (GRTQL), 82-85 (DLPG), 149-152 (TKAD), and 182-185 (LFSA) contribute to the GTP site. The Mg(2+) site is built by S45 and T66.

Belongs to the TRAFAC class TrmE-Era-EngA-EngB-Septin-like GTPase superfamily. EngB GTPase family. The cofactor is Mg(2+).

Its function is as follows. Necessary for normal cell division and for the maintenance of normal septation. The sequence is that of Probable GTP-binding protein EngB from Pseudomonas fluorescens (strain SBW25).